The sequence spans 199 residues: Probable GTP-binding protein EngB (199 aa).

Residues 28 to 199 (DLPEIALAGR…DSWDAILEQV (172 aa)) enclose the EngB-type G domain. Residues 36 to 43 (GRSNVGKS), 63 to 67 (GKTQL), 81 to 84 (DVPG), 148 to 151 (TKAD), and 180 to 182 (FSS) contribute to the GTP site. 2 residues coordinate Mg(2+): serine 43 and threonine 65.

It belongs to the TRAFAC class TrmE-Era-EngA-EngB-Septin-like GTPase superfamily. EngB GTPase family. Requires Mg(2+) as cofactor.

Functionally, necessary for normal cell division and for the maintenance of normal septation. The chain is Probable GTP-binding protein EngB from Streptococcus pyogenes serotype M1.